The chain runs to 215 residues: Urease accessory protein UreE (215 aa).

The segment at 134–215 (FDPEGGAYAP…HGHSHKHDHK (82 aa)) is disordered. Positions 164–206 (GHHDHADHEHDHKHDHGKHDHAGHDHAHDHHVHDEHCGHDHGH) are enriched in basic and acidic residues.

Belongs to the UreE family.

It localises to the cytoplasm. In terms of biological role, involved in urease metallocenter assembly. Binds nickel. Probably functions as a nickel donor during metallocenter assembly. The sequence is that of Urease accessory protein UreE from Rhodopseudomonas palustris (strain HaA2).